A 251-amino-acid polypeptide reads, in one-letter code: ATP synthase subunit a (251 aa).

A run of 5 helical transmembrane segments spans residues 14 to 34 (GFVKLNGTIIYTWLLMLLLAV), 78 to 98 (YLPFLGTLFVFVAVANLFAVF), 107 to 127 (SLSTTVALAICVFVAVPFYGI), 174 to 194 (MILAIMLIITPFIFPVVMGVL), and 196 to 216 (LLIGGVQAYIFSILATVYIAA). The segment at 224-251 (NAGASDDEGGEDAKSACAAGGKICKHKP) is disordered.

It belongs to the ATPase A chain family. As to quaternary structure, F-type ATPases have 2 components, CF(1) - the catalytic core - and CF(0) - the membrane proton channel. CF(1) has five subunits: alpha(3), beta(3), gamma(1), delta(1), epsilon(1). CF(0) has three main subunits: a(1), b(2) and c(9-12). The alpha and beta chains form an alternating ring which encloses part of the gamma chain. CF(1) is attached to CF(0) by a central stalk formed by the gamma and epsilon chains, while a peripheral stalk is formed by the delta and b chains.

The protein localises to the cell inner membrane. Functionally, key component of the proton channel; it plays a direct role in the translocation of protons across the membrane. The sequence is that of ATP synthase subunit a from Nitrosospira multiformis (strain ATCC 25196 / NCIMB 11849 / C 71).